The sequence spans 238 residues: Probable transcriptional regulatory protein YeeN (238 aa).

Belongs to the TACO1 family. YeeN subfamily.

Its subcellular location is the cytoplasm. The sequence is that of Probable transcriptional regulatory protein YeeN from Escherichia coli O157:H7.